Reading from the N-terminus, the 1585-residue chain is uncharacterized protein (1585 aa).

A coiled-coil region spans residues 12–59; the sequence is DKISRKLRMIQGNAERLKRAANGPLIFEAEDRTERVMRQIDRSANRLT. 2 disordered regions span residues 586–627 and 645–692; these read PKRT…SLPR and IRRR…NPTR. Positions 618 to 627 are enriched in polar residues; the sequence is TATGPTSLPR. The span at 645-655 shows a compositional bias: basic residues; the sequence is IRRRRGKRVLG. Polar residues predominate over residues 661–672; that stretch reads NRMNPSDSSIAV. Residues S970 and S972 each carry the phosphoserine modification.

The protein to B.subtilis XkdO.

This is an uncharacterized protein from Bacillus subtilis (strain 168).